The chain runs to 382 residues: 4-hydroxybutyrate dehydrogenase (382 aa).

Residues Asp-37, Asn-67, 94-98 (GSSID), 138-142 (TTSGT), and Lys-159 each bind NAD(+). Fe cation-binding residues include Asp-193, His-197, His-261, and His-280. His-280 is a binding site for NAD(+).

It belongs to the iron-containing alcohol dehydrogenase family. It depends on Fe cation as a cofactor.

The catalysed reaction is 4-hydroxybutanoate + NAD(+) = succinate semialdehyde + NADH + H(+). Shows competitive inhibition of GHBDH activity by the product succinic semialdehyde, and non-competitive inhibitions by the three other substrate-product combinations. The conversion of GHB to SSA is activated by two different saturating purified nudix hydrolases, B.methanolicus activator ACT and E.coli NudF. The nudix hydrolases do not activate the reverse reaction. In terms of biological role, involved in the degradation of 4-hydroxybutyrate. Catalyzes the interconversion of gamma-hydroxybutyrate (GHB) and succinic semialdehyde (SSA). The polypeptide is 4-hydroxybutyrate dehydrogenase (Cupriavidus necator (Alcaligenes eutrophus)).